A 158-amino-acid polypeptide reads, in one-letter code: SsrA-binding protein (158 aa).

Residues 131 to 158 (KQLHDKRQTEKERDWNKQKQRILQTNQR) form a disordered region. Residues 132–147 (QLHDKRQTEKERDWNK) show a composition bias toward basic and acidic residues.

This sequence belongs to the SmpB family.

It localises to the cytoplasm. Functionally, required for rescue of stalled ribosomes mediated by trans-translation. Binds to transfer-messenger RNA (tmRNA), required for stable association of tmRNA with ribosomes. tmRNA and SmpB together mimic tRNA shape, replacing the anticodon stem-loop with SmpB. tmRNA is encoded by the ssrA gene; the 2 termini fold to resemble tRNA(Ala) and it encodes a 'tag peptide', a short internal open reading frame. During trans-translation Ala-aminoacylated tmRNA acts like a tRNA, entering the A-site of stalled ribosomes, displacing the stalled mRNA. The ribosome then switches to translate the ORF on the tmRNA; the nascent peptide is terminated with the 'tag peptide' encoded by the tmRNA and targeted for degradation. The ribosome is freed to recommence translation, which seems to be the essential function of trans-translation. The sequence is that of SsrA-binding protein from Teredinibacter turnerae (strain ATCC 39867 / T7901).